The primary structure comprises 433 residues: Adenylosuccinate synthetase (433 aa).

GTP contacts are provided by residues 18 to 24 (GDEGKGK) and 46 to 48 (GHT). The Proton acceptor role is filled by Asp19. Residues Asp19 and Gly46 each coordinate Mg(2+). IMP-binding positions include 19–22 (DEGK), 44–47 (NAGH), Thr136, Arg150, Gln229, Thr244, and Arg308. His47 (proton donor) is an active-site residue. 304-310 (VTTKRMR) provides a ligand contact to substrate. GTP is bound by residues Arg310, 336-338 (KID), and 420-422 (GTG).

It belongs to the adenylosuccinate synthetase family. In terms of assembly, homodimer. Requires Mg(2+) as cofactor.

The protein localises to the cytoplasm. It catalyses the reaction IMP + L-aspartate + GTP = N(6)-(1,2-dicarboxyethyl)-AMP + GDP + phosphate + 2 H(+). It functions in the pathway purine metabolism; AMP biosynthesis via de novo pathway; AMP from IMP: step 1/2. In terms of biological role, plays an important role in the de novo pathway and in the salvage pathway of purine nucleotide biosynthesis. Catalyzes the first committed step in the biosynthesis of AMP from IMP. In Schistosoma japonicum (Blood fluke), this protein is Adenylosuccinate synthetase.